A 331-amino-acid polypeptide reads, in one-letter code: Phosphate acyltransferase (331 aa).

The protein belongs to the PlsX family. In terms of assembly, homodimer. Probably interacts with PlsY.

The protein resides in the cytoplasm. It catalyses the reaction a fatty acyl-[ACP] + phosphate = an acyl phosphate + holo-[ACP]. The protein operates within lipid metabolism; phospholipid metabolism. Functionally, catalyzes the reversible formation of acyl-phosphate (acyl-PO(4)) from acyl-[acyl-carrier-protein] (acyl-ACP). This enzyme utilizes acyl-ACP as fatty acyl donor, but not acyl-CoA. The chain is Phosphate acyltransferase from Malacoplasma penetrans (strain HF-2) (Mycoplasma penetrans).